A 685-amino-acid chain; its full sequence is Multicopper oxidase VdtB (685 aa).

A signal peptide spans 1–17; the sequence is MPAYLLLLACNVLLVLG. Plastocyanin-like domains follow at residues 26–139 and 168–368; these read LTWE…IRRK and IMML…RYKN. An N-linked (GlcNAc...) asparagine glycan is attached at Asn-71. Residues His-75, His-77, His-119, and His-121 each contribute to the Cu cation site. N-linked (GlcNAc...) asparagine glycans are attached at residues Asn-178, Asn-229, Asn-253, Asn-432, and Asn-475. A Plastocyanin-like 3 domain is found at 466-585; it reads DDDLIIRTQN…DNGMAMAILD (120 aa). His-500 lines the Cu cation pocket. Asn-517 carries N-linked (GlcNAc...) asparagine glycosylation. Residues 627–647 form a helical membrane-spanning segment; it reads SLVWAGGAAVVLLSLFIGGLW.

Belongs to the multicopper oxidase family.

It localises to the membrane. The enzyme catalyses 4 semiviriditoxin + O2 = 2 (M)-viriditoxin + 2 H2O. The protein operates within secondary metabolite biosynthesis. Functionally, multicopper oxidase; part of the gene cluster that mediates the biosynthesis of viriditoxin, one of the 'classical' secondary metabolites produced by fungi and that has antibacterial activity. The first step is performed by the polyketide synthase VdtA which condenses one acetyl-CoA and 6 malonyl-CoA units to form the heptaketide monomer backbone of viriditoxin. The product of VdtA is then O-methylated on C7 by the O-methyltransferase VdtC. The O-methyl group is important for the stereoselective coupling of the monomers at the final step of viriditoxin biosynthesis. The short-chain dehydrogenase/reductase VdtF then acts as a stereospecific reductase converting the pyrone to dihydropyrone via the reduction of the C3-C4 double bond. The FAD-binding monooxygenase VdtE then converts the ketone group into a methyl-ester group to yield semi-viriditoxin. Finally, the laccase VdtB is involved in dimerization of 2 semi-viriditoxin molecules to yield the final viriditoxin. VdtB is responsible for the regioselective 6,6'-coupling of semi-viriditoxin, which yields (M)-viriditoxin and (P)-viriditoxin at a ratio of 1:2. The non-catalytic carboxylesterase-like protein VdtD affects the stereochemistical outcome of the coupling. The highly reducing polyketide synthase VdtX is not involved in viriditoxin synthesis, but might possibly play a role in the production of additional metabolites not identified yet. In Byssochlamys spectabilis (Paecilomyces variotii), this protein is Multicopper oxidase VdtB.